A 187-amino-acid polypeptide reads, in one-letter code: HTH-type transcriptional regulator NfxB (187 aa).

A DNA-binding region (H-T-H motif) is located at residues 26–45; the sequence is LKELAEAAGVSKATLHRFCG.

Its function is as follows. Confers resistance to guinolones. May negatively regulate the expression of genes that are associated with cell permeability to drugs. This Pseudomonas aeruginosa (strain ATCC 15692 / DSM 22644 / CIP 104116 / JCM 14847 / LMG 12228 / 1C / PRS 101 / PAO1) protein is HTH-type transcriptional regulator NfxB (nfxB).